Reading from the N-terminus, the 476-residue chain is uncharacterized protein (476 aa).

One can recognise a LisH domain in the interval Ser7–Leu39.

This is an uncharacterized protein from Saccharomyces cerevisiae (strain ATCC 204508 / S288c) (Baker's yeast).